The primary structure comprises 348 residues: Mannonate dehydratase (348 aa).

The protein belongs to the mannonate dehydratase family. Requires Fe(2+) as cofactor. Mn(2+) serves as cofactor.

The enzyme catalyses D-mannonate = 2-dehydro-3-deoxy-D-gluconate + H2O. It functions in the pathway carbohydrate metabolism; pentose and glucuronate interconversion. Catalyzes the dehydration of D-mannonate. The sequence is that of Mannonate dehydratase from Streptococcus uberis (strain ATCC BAA-854 / 0140J).